Here is a 169-residue protein sequence, read N- to C-terminus: Regulator of ribonuclease activity A (169 aa).

Belongs to the RraA family. As to quaternary structure, homotrimer. Binds to both RNA-binding sites in the C-terminal region of Rne and to RhlB.

It localises to the cytoplasm. In terms of biological role, globally modulates RNA abundance by binding to RNase E (Rne) and regulating its endonucleolytic activity. Can modulate Rne action in a substrate-dependent manner by altering the composition of the degradosome. Modulates RNA-binding and helicase activities of the degradosome. In Photorhabdus laumondii subsp. laumondii (strain DSM 15139 / CIP 105565 / TT01) (Photorhabdus luminescens subsp. laumondii), this protein is Regulator of ribonuclease activity A.